The primary structure comprises 292 residues: 4-hydroxy-tetrahydrodipicolinate synthase (292 aa).

Position 45 (Thr-45) interacts with pyruvate. Tyr-133 acts as the Proton donor/acceptor in catalysis. Catalysis depends on Lys-161, which acts as the Schiff-base intermediate with substrate. Ile-203 provides a ligand contact to pyruvate.

This sequence belongs to the DapA family. In terms of assembly, homotetramer; dimer of dimers.

It localises to the cytoplasm. It carries out the reaction L-aspartate 4-semialdehyde + pyruvate = (2S,4S)-4-hydroxy-2,3,4,5-tetrahydrodipicolinate + H2O + H(+). It functions in the pathway amino-acid biosynthesis; L-lysine biosynthesis via DAP pathway; (S)-tetrahydrodipicolinate from L-aspartate: step 3/4. In terms of biological role, catalyzes the condensation of (S)-aspartate-beta-semialdehyde [(S)-ASA] and pyruvate to 4-hydroxy-tetrahydrodipicolinate (HTPA). This chain is 4-hydroxy-tetrahydrodipicolinate synthase, found in Herminiimonas arsenicoxydans.